Reading from the N-terminus, the 590-residue chain is Multidrug resistance ABC transporter ATP-binding and permease protein (590 aa).

Transmembrane regions (helical) follow at residues 35–55, 79–99, 150–170, 176–196, 261–281, and 292–312; these read YLFF…QLQV, IALY…LGIF, IPQA…MLQM, LAMI…MTFG, VMML…IYLI, and LGMM…ATFF. The 280-residue stretch at 38–317 folds into the ABC transmembrane type-1 domain; the sequence is FVIGIVAGII…VATFFTELAK (280 aa). The 236-residue stretch at 349 to 584 folds into the ABC transporter domain; the sequence is LSAHHVDFAY…HPLYAKYVSE (236 aa). 382–389 provides a ligand contact to ATP; the sequence is GPSGGGKS.

This sequence belongs to the ABC transporter superfamily. Multidrug exporter LmrA (TC 3.A.1.117.1) family. As to quaternary structure, homodimer.

It is found in the cell membrane. It catalyses the reaction ATP + H2O + xenobioticSide 1 = ADP + phosphate + xenobioticSide 2.. Efflux transporter for a variety of amphiphilic cationic compounds, including antibiotics. This chain is Multidrug resistance ABC transporter ATP-binding and permease protein (lmrA), found in Lactococcus lactis subsp. cremoris (strain MG1363).